A 60-amino-acid polypeptide reads, in one-letter code: Cytotoxin 1 (60 aa).

Cystine bridges form between C3–C21, C14–C38, C42–C53, and C54–C59.

It belongs to the three-finger toxin family. Short-chain subfamily. Type IA cytotoxin sub-subfamily. Monomer in solution; Homodimer and oligomer in the presence of negatively charged lipids forming a pore with a size ranging between 20 and 30 angstroms. Expressed by the venom gland.

Its subcellular location is the secreted. It is found in the target cell membrane. Basic protein that binds to cell membrane and depolarizes cardiomyocytes. This cytotoxin also possesses lytic activity on many other cells, including red blood cells. Interaction with sulfatides in the cell membrane induces pore formation and cell internalization and is responsible for cytotoxicity in cardiomyocytes. It targets the mitochondrial membrane and induces mitochondrial swelling and fragmentation. Inhibits protein kinases C. It binds to the integrin alpha-V/beta-3 with a moderate affinity. This is Cytotoxin 1 from Naja pallida (Red spitting cobra).